A 210-amino-acid polypeptide reads, in one-letter code: Large ribosomal subunit protein bL25 (210 aa).

Residues 186-210 are disordered; sequence ISSASTEKEAESNQESTSTTPSSES. Residues 198 to 210 show a composition bias toward low complexity; sequence NQESTSTTPSSES.

The protein belongs to the bacterial ribosomal protein bL25 family. CTC subfamily. Part of the 50S ribosomal subunit; part of the 5S rRNA/L5/L18/L25 subcomplex. Contacts the 5S rRNA. Binds to the 5S rRNA independently of L5 and L18.

This is one of the proteins that binds to the 5S RNA in the ribosome where it forms part of the central protuberance. The polypeptide is Large ribosomal subunit protein bL25 (Ehrlichia chaffeensis (strain ATCC CRL-10679 / Arkansas)).